The following is a 283-amino-acid chain: Mau operon transcriptional activator (283 aa).

Residues 1 to 58 (MNWDDLRVVAAINRCGSFNRAAKMLNVEETTIARRLARLEGSLGCVLFQAVDGQRRPT) form the HTH lysR-type domain. Residues 18–37 (FNRAAKMLNVEETTIARRLA) constitute a DNA-binding region (H-T-H motif).

Belongs to the LysR transcriptional regulatory family.

Transcriptional activator of the mau genes involved in methylamine metabolism. The polypeptide is Mau operon transcriptional activator (mauR) (Paracoccus denitrificans).